The following is a 374-amino-acid chain: UDP-N-acetylglucosamine--N-acetylmuramyl-(pentapeptide) pyrophosphoryl-undecaprenol N-acetylglucosamine transferase (374 aa).

UDP-N-acetyl-alpha-D-glucosamine is bound by residues 13–15 (TGG), Asn-124, Arg-165, Ser-193, and Gln-294.

The protein belongs to the glycosyltransferase 28 family. MurG subfamily.

Its subcellular location is the cell inner membrane. It carries out the reaction di-trans,octa-cis-undecaprenyl diphospho-N-acetyl-alpha-D-muramoyl-L-alanyl-D-glutamyl-meso-2,6-diaminopimeloyl-D-alanyl-D-alanine + UDP-N-acetyl-alpha-D-glucosamine = di-trans,octa-cis-undecaprenyl diphospho-[N-acetyl-alpha-D-glucosaminyl-(1-&gt;4)]-N-acetyl-alpha-D-muramoyl-L-alanyl-D-glutamyl-meso-2,6-diaminopimeloyl-D-alanyl-D-alanine + UDP + H(+). It participates in cell wall biogenesis; peptidoglycan biosynthesis. Its function is as follows. Cell wall formation. Catalyzes the transfer of a GlcNAc subunit on undecaprenyl-pyrophosphoryl-MurNAc-pentapeptide (lipid intermediate I) to form undecaprenyl-pyrophosphoryl-MurNAc-(pentapeptide)GlcNAc (lipid intermediate II). This is UDP-N-acetylglucosamine--N-acetylmuramyl-(pentapeptide) pyrophosphoryl-undecaprenol N-acetylglucosamine transferase from Rhizobium etli (strain CIAT 652).